A 210-amino-acid chain; its full sequence is GEM-like protein 7 (210 aa).

Residues 88 to 166 (KIYKRLFKVC…CKINGVNQSQ (79 aa)) form the GRAM domain.

Belongs to the GEM family.

This chain is GEM-like protein 7, found in Arabidopsis thaliana (Mouse-ear cress).